A 500-amino-acid chain; its full sequence is Glycerol kinase (500 aa).

Threonine 13 lines the ADP pocket. ATP is bound by residues threonine 13, threonine 14, and serine 15. Threonine 13 serves as a coordination point for sn-glycerol 3-phosphate. Arginine 17 provides a ligand contact to ADP. Residues arginine 83, glutamate 84, tyrosine 135, and aspartate 245 each coordinate sn-glycerol 3-phosphate. Residues arginine 83, glutamate 84, tyrosine 135, aspartate 245, and glutamine 246 each contribute to the glycerol site. ADP is bound by residues threonine 267 and glycine 310. ATP-binding residues include threonine 267, glycine 310, glutamine 314, and glycine 411. Residues glycine 411 and asparagine 415 each contribute to the ADP site.

It belongs to the FGGY kinase family. In terms of assembly, homotetramer and homodimer (in equilibrium).

The catalysed reaction is glycerol + ATP = sn-glycerol 3-phosphate + ADP + H(+). It participates in polyol metabolism; glycerol degradation via glycerol kinase pathway; sn-glycerol 3-phosphate from glycerol: step 1/1. Its activity is regulated as follows. Activated by phosphorylation and inhibited by fructose 1,6-bisphosphate (FBP). In terms of biological role, key enzyme in the regulation of glycerol uptake and metabolism. Catalyzes the phosphorylation of glycerol to yield sn-glycerol 3-phosphate. The chain is Glycerol kinase from Carboxydothermus hydrogenoformans (strain ATCC BAA-161 / DSM 6008 / Z-2901).